The following is a 415-amino-acid chain: Putative FNIP repeat-containing protein L415 (415 aa).

One copy of the FNIP repeat lies at 148–185; the sequence is FIKKGAIPDSVTHLYFGSDYLSKDIIPKNVVYLRFGDF.

The sequence is that of Putative FNIP repeat-containing protein L415 from Acanthamoeba polyphaga mimivirus (APMV).